Reading from the N-terminus, the 961-residue chain is Glycine dehydrogenase (decarboxylating) (961 aa).

K702 is modified (N6-(pyridoxal phosphate)lysine).

This sequence belongs to the GcvP family. As to quaternary structure, the glycine cleavage system is composed of four proteins: P, T, L and H. The cofactor is pyridoxal 5'-phosphate.

It catalyses the reaction N(6)-[(R)-lipoyl]-L-lysyl-[glycine-cleavage complex H protein] + glycine + H(+) = N(6)-[(R)-S(8)-aminomethyldihydrolipoyl]-L-lysyl-[glycine-cleavage complex H protein] + CO2. In terms of biological role, the glycine cleavage system catalyzes the degradation of glycine. The P protein binds the alpha-amino group of glycine through its pyridoxal phosphate cofactor; CO(2) is released and the remaining methylamine moiety is then transferred to the lipoamide cofactor of the H protein. This is Glycine dehydrogenase (decarboxylating) from Rhodopseudomonas palustris (strain BisA53).